The following is a 204-amino-acid chain: dITP/XTP pyrophosphatase (204 aa).

7–12 (TNNKDK) is a substrate binding site. Residues Asp-38 and Asp-74 each contribute to the Mg(2+) site. Catalysis depends on Asp-74, which acts as the Proton acceptor. Residues Ser-75, 156–159 (FGYD), Lys-179, and 184–185 (HR) each bind substrate.

This sequence belongs to the HAM1 NTPase family. As to quaternary structure, homodimer. It depends on Mg(2+) as a cofactor.

The catalysed reaction is XTP + H2O = XMP + diphosphate + H(+). It carries out the reaction dITP + H2O = dIMP + diphosphate + H(+). The enzyme catalyses ITP + H2O = IMP + diphosphate + H(+). In terms of biological role, pyrophosphatase that catalyzes the hydrolysis of nucleoside triphosphates to their monophosphate derivatives, with a high preference for the non-canonical purine nucleotides XTP (xanthosine triphosphate), dITP (deoxyinosine triphosphate) and ITP. Seems to function as a house-cleaning enzyme that removes non-canonical purine nucleotides from the nucleotide pool, thus preventing their incorporation into DNA/RNA and avoiding chromosomal lesions. The chain is dITP/XTP pyrophosphatase from Campylobacter fetus subsp. fetus (strain 82-40).